The following is a 415-amino-acid chain: uncharacterized protein (415 aa).

This is an uncharacterized protein from Escherichia coli (strain K12).